Here is a 1189-residue protein sequence, read N- to C-terminus: Pesticidal crystal protein Cry1Ca (1189 aa).

The protein belongs to the delta endotoxin family.

Functionally, promotes colloidosmotic lysis by binding to the midgut epithelial cells of many lepidopteran larvae including Spodoptera species. The chain is Pesticidal crystal protein Cry1Ca (cry1Ca) from Bacillus thuringiensis subsp. aizawai.